We begin with the raw amino-acid sequence, 364 residues long: Ferrochelatase (364 aa).

Residues H210 and E291 each contribute to the Fe cation site.

Belongs to the ferrochelatase family.

The protein resides in the cytoplasm. The catalysed reaction is heme b + 2 H(+) = protoporphyrin IX + Fe(2+). It functions in the pathway porphyrin-containing compound metabolism; protoheme biosynthesis; protoheme from protoporphyrin-IX: step 1/1. Functionally, catalyzes the ferrous insertion into protoporphyrin IX. The polypeptide is Ferrochelatase (Idiomarina loihiensis (strain ATCC BAA-735 / DSM 15497 / L2-TR)).